A 273-amino-acid chain; its full sequence is 2,3,4,5-tetrahydropyridine-2,6-dicarboxylate N-succinyltransferase (273 aa).

Residues R104 and D141 each coordinate substrate.

It belongs to the transferase hexapeptide repeat family. In terms of assembly, homotrimer.

Its subcellular location is the cytoplasm. It carries out the reaction (S)-2,3,4,5-tetrahydrodipicolinate + succinyl-CoA + H2O = (S)-2-succinylamino-6-oxoheptanedioate + CoA. It participates in amino-acid biosynthesis; L-lysine biosynthesis via DAP pathway; LL-2,6-diaminopimelate from (S)-tetrahydrodipicolinate (succinylase route): step 1/3. The chain is 2,3,4,5-tetrahydropyridine-2,6-dicarboxylate N-succinyltransferase from Buchnera aphidicola subsp. Schizaphis graminum (strain Sg).